We begin with the raw amino-acid sequence, 310 residues long: p-hydroxybenzoic acid efflux pump subunit AaeA (310 aa).

A helical membrane pass occupies residues 12–32; it reads AITVVLVVLAFIAIFRAWSFY.

This sequence belongs to the membrane fusion protein (MFP) (TC 8.A.1) family.

The protein resides in the cell inner membrane. Forms an efflux pump with AaeB. The protein is p-hydroxybenzoic acid efflux pump subunit AaeA of Cronobacter sakazakii (strain ATCC BAA-894) (Enterobacter sakazakii).